The primary structure comprises 414 residues: Methyl-CpG-binding domain protein 2 (414 aa).

A required for interaction with DHX9 and PRMT5 region spans residues 1 to 152; that stretch reads MRAHPGGGRC…GPRATESGKR (152 aa). The tract at residues 1-163 is disordered; sequence MRAHPGGGRC…DCPALPPGWK (163 aa). Over residues 77-95 the composition is skewed to basic residues; that stretch reads GRGRGRGRGRGRGRGRGRG. The segment covering 98–123 has biased composition (gly residues); the sequence is QSGGSGLGGDGGGGAGGCGGGSGGGV. The MBD domain maps to 148 to 216; it reads ESGKRMDCPA…SSFDFRTGKM (69 aa). Position 184 is a phosphoserine (serine 184). Residues 217-244 are disordered; that stretch reads MPSKLQKNKQRLRNDPLNQNKGKPDLNT. The segment covering 232–244 has biased composition (polar residues); that stretch reads PLNQNKGKPDLNT. Position 410 is a phosphoserine (serine 410).

As to quaternary structure, heterodimer with MBD3 (via N-terminus). Component of the MeCP1 complex that contains HDAC1 and HDAC2. Component of the nucleosome remodeling and deacetylase (NuRD) repressor complex, composed of core proteins MTA1, MTA2, MTA3, RBBP4, RBBP7, HDAC1, HDAC2, MBD2, MBD3, and peripherally associated proteins CDK2AP1, CDK2AP2, GATAD2A, GATAD2B, CHD3, CHD4 and CHD5. The exact stoichiometry of the NuRD complex is unknown, and some subunits such as MBD2 and MBD3, GATAD2A and GATAD2B, and CHD3, CHD4 and CHD5 define mutually exclusive NuRD complexes. Interacts with CDK2AP1. Interacts with DHX9. Interacts with DNMT1. Interacts with GATAD2A/p66-alpha. Interacts with GATAD2B/p66-beta. Interacts with GPN1. Interacts with MIZF. Interacts with PRMT5. Interacts with SIN3A. Interacts with SPHK2. As to expression, highly expressed in brain, heart, kidney, lung, skeletal muscle, spleen and testis. Detected at lower levels in embryonic stem cells.

The protein localises to the nucleus. It is found in the chromosome. Functionally, binds CpG islands in promoters where the DNA is methylated at position 5 of cytosine within CpG dinucleotides. Binds hemimethylated DNA as well. Recruits histone deacetylases and DNA methyltransferases to chromatin. Acts as a component of the histone deacetylase NuRD complex which participates in the remodeling of chromatin. Acts as transcriptional repressor and plays a role in gene silencing. Functions as a scaffold protein, targeting GATAD2A and GATAD2B to chromatin to promote repression. May enhance the activation of some unmethylated cAMP-responsive promoters. Selectively represses transcription activity of methylated rRNA promoters. In Mus musculus (Mouse), this protein is Methyl-CpG-binding domain protein 2.